We begin with the raw amino-acid sequence, 154 residues long: Myoglobin (154 aa).

The Globin domain maps to 2–148; that stretch reads GLSDGEWTLV…FRNDMAAQYK (147 aa). Ser4 is subject to Phosphoserine. His65 provides a ligand contact to nitrite. His65 contacts O2. Thr68 is subject to Phosphothreonine. His94 lines the heme b pocket.

Belongs to the globin family. Monomeric.

It is found in the cytoplasm. The protein localises to the sarcoplasm. The catalysed reaction is Fe(III)-heme b-[protein] + nitric oxide + H2O = Fe(II)-heme b-[protein] + nitrite + 2 H(+). It carries out the reaction H2O2 + AH2 = A + 2 H2O. In terms of biological role, monomeric heme protein which primary function is to store oxygen and facilitate its diffusion within muscle tissues. Reversibly binds oxygen through a pentacoordinated heme iron and enables its timely and efficient release as needed during periods of heightened demand. Depending on the oxidative conditions of tissues and cells, and in addition to its ability to bind oxygen, it also has a nitrite reductase activity whereby it regulates the production of bioactive nitric oxide. Under stress conditions, like hypoxia and anoxia, it also protects cells against reactive oxygen species thanks to its pseudoperoxidase activity. The polypeptide is Myoglobin (Capra hircus (Goat)).